The primary structure comprises 528 residues: Cytochrome P450 monooxygenase ppsD (528 aa).

Residues 2-21 (LVLVSLVLCLTGFCLLQWAL) form a helical membrane-spanning segment. N137 carries an N-linked (GlcNAc...) asparagine glycan. C441 contacts heme. N-linked (GlcNAc...) asparagine glycans are attached at residues N450 and N463.

This sequence belongs to the cytochrome P450 family. The cofactor is heme.

The protein resides in the membrane. Functionally, cytochrome P450 monooxygenase; part of the gene cluster that mediates the biosynthesis of 2,4'-dihydroxy-3'-methoxypropiophenone. The first step of the pathway is the conversion of acetate into acetyl-CoA by the acyl-CoA ligase ppsA. Acetyl-CoA is then used as a starter unit by the polyketide synthase ppsB and condensed with 4 malonyl-CoA unit to produce the pentaketide backbone. During polyketide extension, the polykedite chain is probably reduced and dehydrated by the KR and PT domains, respectively. O-methylation seems to be catalyzed by an unknown methyltransferase rather than by the CMeT domain of ppsB. Two hydroxylations and one further decarboxylation step catalyzed by yet unknown enzymes are then required to yield 4'-hydroxy-3'-methoxypropiophenone. PpsC functions as a carrier protein to transport 4'-hydroxy-3'-methoxypropiophenone to a specific cell compartment in which 4'-hydroxy-3'-methoxypropiophenone is hydroxylated to 2,4'-dihydroxy-3'-methoxypropiophenone by a still to be identified enzyme. This chain is Cytochrome P450 monooxygenase ppsD, found in Aspergillus oryzae (strain ATCC 42149 / RIB 40) (Yellow koji mold).